A 77-amino-acid chain; its full sequence is Mu-conotoxin BuIIIA (77 aa).

Positions Met-1 to Pro-22 are cleaved as a signal peptide. Residues Gln-23 to Arg-51 constitute a propeptide that is removed on maturation. Residues Asp-26–Ser-46 form a disordered region. Residues Pro-28–Asp-38 show a composition bias toward basic and acidic residues. 3 disulfides stabilise this stretch: Cys-56–Cys-67, Cys-57–Cys-73, and Cys-63–Cys-74. At Cys-74 the chain carries Cysteine amide.

It belongs to the conotoxin M superfamily. As to expression, expressed by the venom duct.

The protein localises to the secreted. In terms of biological role, mu-conotoxins block voltage-gated sodium channels (Nav). This synthetic toxin potently blocks rNav1.2/SCN2A, and rNav1.4/SCN4A. It also moderately blocks rNav1.1/SCN1A, rNav1.3/SCN3A, rNav1.5/SCN5A, and mNav1.6/SCN8A. The inhibition is reversible. The protein is Mu-conotoxin BuIIIA of Conus bullatus (Bubble cone).